A 4158-amino-acid polypeptide reads, in one-letter code: Dynein axonemal heavy chain 6 (4158 aa).

Residues 1-1433 are stem; the sequence is MTFRATDSEF…VARMALSQYT (1433 aa). Position 192 to 199 (192 to 199) interacts with ATP; it reads IIRENEHL. A coiled-coil region spans residues 805–859; sequence CVHLGSDLEELNNEVNEVKLQAQDPQILDISADQDKIRLILNNLQSVLADLQKRA. AAA regions lie at residues 1434–1655, 1715–1948, 2058–2306, and 2408–2659; these read YGYE…VLVM, STIV…KKCS, KYNR…CVQG, and DYNL…LRRR. Residues 1472-1479, 1753-1760, 2096-2103, and 2447-2454 contribute to the ATP site; these read GPAGTGKT, GPTGGGKT, GITGVGKS, and GVGGTGKQ. The tract at residues 2676–2961 is stalk; that stretch reads SMLSEKRKQI…KTMALTKARL (286 aa). The stretch at 2901-2996 forms a coiled coil; sequence KRQKLRAAQA…EEISNITGNV (96 aa). 2 AAA regions span residues 3042-3272 and 3509-3730; these read LGDP…AIKT and LTDF…NLKL.

Belongs to the dynein heavy chain family. In terms of assembly, the dynein complex consists of at least two heavy chains and a number of intermediate and light chains. As to expression, expressed in several tissues, including brain, pituitary, testis and trachea, with highest levels in testis.

It localises to the cytoplasm. The protein localises to the cytoskeleton. It is found in the cilium axoneme. Force generating protein of respiratory cilia. Produces force towards the minus ends of microtubules. Dynein has ATPase activity; the force-producing power stroke is thought to occur on release of ADP. This Homo sapiens (Human) protein is Dynein axonemal heavy chain 6.